Here is a 455-residue protein sequence, read N- to C-terminus: Transcriptional regulatory protein FlbD (455 aa).

Residues 2–114 (RLLVVGKLNG…LIAAVLAAVT (113 aa)) enclose the Response regulatory domain. The Sigma-54 factor interaction domain maps to 120–349 (MVVRDPAMEQ…LENAMHRAVL (230 aa)). ATP is bound by residues 148-155 (GESGSGKE) and 211-220 (ADGGTLLLDE). A DNA-binding region (H-T-H motif) is located at residues 416–435 (RTHAANILGISIRTLRNKLK).

It is found in the cytoplasm. In terms of biological role, activation of sigma-54-dependent flagellar gene promoters and strong negative autoregulatory effects on its own promoter. The synthesis and function of FlbD in C.crescentus is controlled by an internal cell-cycle clock. This chain is Transcriptional regulatory protein FlbD (flbD), found in Caulobacter vibrioides (strain ATCC 19089 / CIP 103742 / CB 15) (Caulobacter crescentus).